We begin with the raw amino-acid sequence, 33 residues long: Neurotoxin Nk-3FTx (33 aa).

Disulfide bonds link Cys-3/Cys-24 and Cys-6/Cys-11.

Expressed by the venom gland.

Its subcellular location is the secreted. Functionally, possible voltage-gated potassium channel (Kv) blocker. Decreases amplitude of compound action potential and conduction velocity in toad sciatic nerve. Has only mild anticoagulant activity even at a concentration of 5ug/ml. Shows no cytotoxicity towards human cell lines. The polypeptide is Neurotoxin Nk-3FTx (Naja kaouthia (Monocled cobra)).